The following is a 37-amino-acid chain: Serrulin (37 aa).

A disordered region spans residues 16–37 (FGGGGIGGGGFGGGYGGGKIKG). Position 36 is a lysine amide (Lys36).

In terms of tissue distribution, expressed in hemocytes (at protein level).

It localises to the secreted. Its function is as follows. Antimicrobial protein with activity against Gram-positive and Gram-negative bacteria, filamentous fungus, and yeast. Was tested against Micrococcus luteus A270 (MIC=0.5-1 uM), Echerichia coli SBS 363 (MIC=9-16 uM), Pseudomonas aeruginosa (MIC=0.01-0.3 uM), Aspergillus niger (MIC=3-6 uM), and Candida albicans MDM8 (MIC=1.5-3 uM). Has no hemolytic activity against human erythrocytes. The protein is Serrulin of Tityus serrulatus (Brazilian scorpion).